The following is a 193-amino-acid chain: NADH-quinone oxidoreductase subunit B (193 aa).

The tract at residues 1–25 (MGLNDSSGTLVAPKPKGIIDPNTGR) is disordered. The [4Fe-4S] cluster site is built by Cys72, Cys73, Cys137, and Cys167.

It belongs to the complex I 20 kDa subunit family. As to quaternary structure, NDH-1 is composed of 14 different subunits. Subunits NuoB, C, D, E, F, and G constitute the peripheral sector of the complex. [4Fe-4S] cluster is required as a cofactor.

It localises to the cell inner membrane. The enzyme catalyses a quinone + NADH + 5 H(+)(in) = a quinol + NAD(+) + 4 H(+)(out). Functionally, NDH-1 shuttles electrons from NADH, via FMN and iron-sulfur (Fe-S) centers, to quinones in the respiratory chain. Couples the redox reaction to proton translocation (for every two electrons transferred, four hydrogen ions are translocated across the cytoplasmic membrane), and thus conserves the redox energy in a proton gradient. The polypeptide is NADH-quinone oxidoreductase subunit B (Mesorhizobium japonicum (strain LMG 29417 / CECT 9101 / MAFF 303099) (Mesorhizobium loti (strain MAFF 303099))).